The sequence spans 451 residues: Tubulin alpha chain (451 aa).

Q11 contributes to the GTP binding site. K40 carries the N6-acetyllysine modification. The GTP site is built by E71, G144, T145, T179, N206, and N228. Mg(2+) is bound at residue E71. Residue E254 is part of the active site.

This sequence belongs to the tubulin family. In terms of assembly, dimer of alpha and beta chains. A typical microtubule is a hollow water-filled tube with an outer diameter of 25 nm and an inner diameter of 15 nM. Alpha-beta heterodimers associate head-to-tail to form protofilaments running lengthwise along the microtubule wall with the beta-tubulin subunit facing the microtubule plus end conferring a structural polarity. Microtubules usually have 13 protofilaments but different protofilament numbers can be found in some organisms and specialized cells. Mg(2+) serves as cofactor. Post-translationally, undergoes a tyrosination/detyrosination cycle, the cyclic removal and re-addition of a C-terminal tyrosine residue by the enzymes tubulin tyrosine carboxypeptidase (TTCP) and tubulin tyrosine ligase (TTL), respectively. Acetylation of alpha chains at Lys-40 stabilizes microtubules and affects affinity and processivity of microtubule motors. This modification has a role in multiple cellular functions, ranging from cell motility, cell cycle progression or cell differentiation to intracellular trafficking and signaling.

It is found in the cytoplasm. It localises to the cytoskeleton. The enzyme catalyses GTP + H2O = GDP + phosphate + H(+). In terms of biological role, tubulin is the major constituent of microtubules, a cylinder consisting of laterally associated linear protofilaments composed of alpha- and beta-tubulin heterodimers. Microtubules grow by the addition of GTP-tubulin dimers to the microtubule end, where a stabilizing cap forms. Below the cap, tubulin dimers are in GDP-bound state, owing to GTPase activity of alpha-tubulin. This Euglena gracilis protein is Tubulin alpha chain (TUBA).